A 425-amino-acid polypeptide reads, in one-letter code: UPF0597 protein Moth_1414 (425 aa).

This sequence belongs to the UPF0597 family.

This chain is UPF0597 protein Moth_1414, found in Moorella thermoacetica (strain ATCC 39073 / JCM 9320).